The sequence spans 767 residues: Polyribonucleotide nucleotidyltransferase (767 aa).

2 residues coordinate Mg(2+): Asp-509 and Asp-515. In terms of domain architecture, KH spans Pro-575–Ile-634. Residues Gly-646–Val-718 form the S1 motif domain. A disordered region spans residues Ala-725–Thr-767. A compositionally biased stretch (basic residues) spans Gln-750–Ser-759.

This sequence belongs to the polyribonucleotide nucleotidyltransferase family. Requires Mg(2+) as cofactor.

The protein localises to the cytoplasm. It carries out the reaction RNA(n+1) + phosphate = RNA(n) + a ribonucleoside 5'-diphosphate. Its function is as follows. Involved in mRNA degradation. Catalyzes the phosphorolysis of single-stranded polyribonucleotides processively in the 3'- to 5'-direction. This Thermobifida fusca (strain YX) protein is Polyribonucleotide nucleotidyltransferase.